The chain runs to 202 residues: 3-isopropylmalate dehydratase small subunit (202 aa).

The protein belongs to the LeuD family. LeuD type 1 subfamily. In terms of assembly, heterodimer of LeuC and LeuD.

It catalyses the reaction (2R,3S)-3-isopropylmalate = (2S)-2-isopropylmalate. It functions in the pathway amino-acid biosynthesis; L-leucine biosynthesis; L-leucine from 3-methyl-2-oxobutanoate: step 2/4. Its function is as follows. Catalyzes the isomerization between 2-isopropylmalate and 3-isopropylmalate, via the formation of 2-isopropylmaleate. The chain is 3-isopropylmalate dehydratase small subunit from Nocardioides sp. (strain ATCC BAA-499 / JS614).